Here is a 179-residue protein sequence, read N- to C-terminus: Adenine phosphoribosyltransferase (179 aa).

It belongs to the purine/pyrimidine phosphoribosyltransferase family. In terms of assembly, homodimer.

Its subcellular location is the cytoplasm. The enzyme catalyses AMP + diphosphate = 5-phospho-alpha-D-ribose 1-diphosphate + adenine. It functions in the pathway purine metabolism; AMP biosynthesis via salvage pathway; AMP from adenine: step 1/1. Its function is as follows. Catalyzes a salvage reaction resulting in the formation of AMP, that is energically less costly than de novo synthesis. In Dinoroseobacter shibae (strain DSM 16493 / NCIMB 14021 / DFL 12), this protein is Adenine phosphoribosyltransferase.